The following is a 207-amino-acid chain: Pyrrolidone-carboxylate peptidase (207 aa).

Residues Glu80, Cys143, and His167 contribute to the active site.

The protein belongs to the peptidase C15 family. In terms of assembly, homotetramer.

The protein localises to the cytoplasm. It carries out the reaction Release of an N-terminal pyroglutamyl group from a polypeptide, the second amino acid generally not being Pro.. Functionally, removes 5-oxoproline from various penultimate amino acid residues except L-proline. The chain is Pyrrolidone-carboxylate peptidase from Coprothermobacter proteolyticus (strain ATCC 35245 / DSM 5265 / OCM 4 / BT).